The sequence spans 502 residues: ATP synthase subunit alpha (502 aa).

169-176 serves as a coordination point for ATP; it reads GDKQTGKT.

The protein belongs to the ATPase alpha/beta chains family. As to quaternary structure, F-type ATPases have 2 components, CF(1) - the catalytic core - and CF(0) - the membrane proton channel. CF(1) has five subunits: alpha(3), beta(3), gamma(1), delta(1), epsilon(1). CF(0) has three main subunits: a(1), b(2) and c(9-12). The alpha and beta chains form an alternating ring which encloses part of the gamma chain. CF(1) is attached to CF(0) by a central stalk formed by the gamma and epsilon chains, while a peripheral stalk is formed by the delta and b chains.

The protein localises to the cell membrane. The enzyme catalyses ATP + H2O + 4 H(+)(in) = ADP + phosphate + 5 H(+)(out). In terms of biological role, produces ATP from ADP in the presence of a proton gradient across the membrane. The alpha chain is a regulatory subunit. The chain is ATP synthase subunit alpha from Lachnoclostridium phytofermentans (strain ATCC 700394 / DSM 18823 / ISDg) (Clostridium phytofermentans).